The chain runs to 1122 residues: MEPSEVPSQISKDNFLEVPNLSDSLCEDEEVTFQPGFSPQPSRRGSDSSEDIYLDTPSSGTRRVSFADSFGFNLVSVKEFDCWELPSASTTFDLGTDIFHTEEYVLAPLFDLPSSKEDLMQQLQIQKAILESTESLLGSTSIKGIIRVLNVSFEKLVYVRMSLDDWQTHYDILAEYVPNSCDGETDQFSFKIVLVPPYQKDGSKVEFCIRYETSVGTFWSNNNGTNYTFICQKKEQEPEPVKPWKEVPNRQIKGCLKVKSSKEESSVTSEENNFENPKNTDTYIPTIICSHEDKEDLEASNRNVKDVNREHDEHNEKELELMINQHLIRTRSTASRDERNTFSTDPVNFPNKAEGLEKKQIHGEICTDLFQRSLSPSSSAESSVKGDFYCNEKYSSGDDCTHQPSEETTSNMGEIKPSLGDTSSDELVQLHTGSKEVLDDNANPAHGNGTVQIPCPSSDQLMAGNLNKKHEGGAKNIEVKDLGCLRRDFHSDTSACLKESTEEGSSKEDYYGNGKDDEEQRIYLGVNEKQRKNFQTILHDQERKMGNPKISVAGIGASNRDLATLLSEHTAIPTRAITADVSHSPRTNLSWEEAVLTPEHHHLTSEGSALGGITGQVCSSRTGNVLRNDYLFQVEEKSGGINSEDQDNSPQHKQSWNVLESQGKSRENKTNITEHIKGQTDCEDVWGKRDNTRSLKATTEELFTCQETVCCELSSLADHGITEKAEAGTAYIIKTTSESTPESMSAREKAIIAKLPQETARSDRPIEVKETAFDPHEGRNDDSHYTLCQRDTVGVIYDNDFEKESRLGICNVRVDEMEKEETMSMYNPRKTHDREKCGTGNITSVEESSWVITEYQKATSKLDLQLGMLPTDKTVFSENRDLRQVQELSKKTDSDAIVHSAFNSDTNRAPQNSSPFSKHHTEISVSTNEQAIAVENAVTTMASQPISTKSENICNSTREIQGIEKHPYPESKPEEVSRSSGIVTSGSRKERCIGQIFQTEEYSVEKSLGPMILINKPLENMEEARHENEGLVSSGQSLYTSGEKESDSSASTSLPVEESQAQGNESLFSKYTNSKIPYFLLFLIFLITVYHYDLMIGLTFYVLSLSWLSWEEGRQKESVKKK.

The tract at residues 32–58 is disordered; sequence TFQPGFSPQPSRRGSDSSEDIYLDTPS. Ser-38 and Ser-42 each carry phosphoserine; by GSK3. At Ser-46 the chain carries Phosphoserine; by PKA and ISPK. Ser-49 carries the post-translational modification Phosphoserine. Residue Thr-56 is modified to Phosphothreonine. Residues 62-65 carry the PP1-binding motif motif; that stretch reads RRVS. A Phosphoserine; by PKA modification is found at Ser-65. One can recognise a CBM21 domain in the interval 122-230; it reads QLQIQKAILE…NNNGTNYTFI (109 aa). Disordered stretches follow at residues 332 to 351, 395 to 422, 496 to 516, and 640 to 668; these read STAS…NFPN, SSGD…LGDT, CLKE…NGKD, and GINS…SREN. 2 stretches are compositionally biased toward basic and acidic residues: residues 395 to 405 and 499 to 516; these read SSGDDCTHQPS and ESTE…NGKD. Over residues 640–662 the composition is skewed to polar residues; that stretch reads GINSEDQDNSPQHKQSWNVLESQ. Ser-844 is modified (phosphoserine). A compositionally biased stretch (basic and acidic residues) spans 963–977; that stretch reads IEKHPYPESKPEEVS. Disordered stretches follow at residues 963-983 and 1025-1058; these read IEKH…SGIV and RHEN…PVEE. 2 stretches are compositionally biased toward polar residues: residues 1031-1040 and 1048-1058; these read LVSSGQSLYT and SSASTSLPVEE. A helical membrane pass occupies residues 1078 to 1098; the sequence is YFLLFLIFLITVYHYDLMIGL.

As to quaternary structure, interacts with PPP1CC catalytic subunit of PP1, and associates with glycogen. In terms of processing, phosphorylation at Ser-46 by ISPK stimulates the dephosphorylation of glycogen synthase and phosphorylase kinase. As to expression, skeletal muscle and heart.

The protein localises to the membrane. In terms of biological role, seems to act as a glycogen-targeting subunit for PP1. PP1 is essential for cell division, and participates in the regulation of glycogen metabolism, muscle contractility and protein synthesis. Plays an important role in glycogen synthesis but is not essential for insulin activation of glycogen synthase. In Homo sapiens (Human), this protein is Protein phosphatase 1 regulatory subunit 3A (PPP1R3A).